We begin with the raw amino-acid sequence, 90 residues long: Probable Fe(2+)-trafficking protein (90 aa).

It belongs to the Fe(2+)-trafficking protein family.

Functionally, could be a mediator in iron transactions between iron acquisition and iron-requiring processes, such as synthesis and/or repair of Fe-S clusters in biosynthetic enzymes. The polypeptide is Probable Fe(2+)-trafficking protein (Vibrio campbellii (strain ATCC BAA-1116)).